A 212-amino-acid chain; its full sequence is Pyridoxine/pyridoxamine 5'-phosphate oxidase (212 aa).

FMN-binding positions include 59-64 (RMVLMK), 74-75 (YS), Lys81, and Gln103. Lys64 is a binding site for substrate. Substrate-binding residues include Tyr121 and Arg125. Residues 138 to 139 (QS) and Trp183 each bind FMN. 189–191 (RLH) is a substrate binding site. Position 193 (Arg193) interacts with FMN.

Belongs to the pyridoxamine 5'-phosphate oxidase family. In terms of assembly, homodimer. The cofactor is FMN.

The catalysed reaction is pyridoxamine 5'-phosphate + O2 + H2O = pyridoxal 5'-phosphate + H2O2 + NH4(+). The enzyme catalyses pyridoxine 5'-phosphate + O2 = pyridoxal 5'-phosphate + H2O2. Its pathway is cofactor metabolism; pyridoxal 5'-phosphate salvage; pyridoxal 5'-phosphate from pyridoxamine 5'-phosphate: step 1/1. The protein operates within cofactor metabolism; pyridoxal 5'-phosphate salvage; pyridoxal 5'-phosphate from pyridoxine 5'-phosphate: step 1/1. Catalyzes the oxidation of either pyridoxine 5'-phosphate (PNP) or pyridoxamine 5'-phosphate (PMP) into pyridoxal 5'-phosphate (PLP). The polypeptide is Pyridoxine/pyridoxamine 5'-phosphate oxidase (Rhodopseudomonas palustris (strain HaA2)).